The primary structure comprises 61 residues: Photosystem II reaction center protein K (61 aa).

A propeptide spanning residues 1–24 is cleaved from the precursor; it reads MPNILSLTCICFNSVIYPTSFFFA. A helical membrane pass occupies residues 32-52; sequence IFNPIVDFMPVIPLFFFLLAF.

This sequence belongs to the PsbK family. As to quaternary structure, PSII is composed of 1 copy each of membrane proteins PsbA, PsbB, PsbC, PsbD, PsbE, PsbF, PsbH, PsbI, PsbJ, PsbK, PsbL, PsbM, PsbT, PsbX, PsbY, PsbZ, Psb30/Ycf12, at least 3 peripheral proteins of the oxygen-evolving complex and a large number of cofactors. It forms dimeric complexes.

Its subcellular location is the plastid. It is found in the chloroplast thylakoid membrane. One of the components of the core complex of photosystem II (PSII). PSII is a light-driven water:plastoquinone oxidoreductase that uses light energy to abstract electrons from H(2)O, generating O(2) and a proton gradient subsequently used for ATP formation. It consists of a core antenna complex that captures photons, and an electron transfer chain that converts photonic excitation into a charge separation. This chain is Photosystem II reaction center protein K, found in Triticum aestivum (Wheat).